The following is a 160-amino-acid chain: Dysbindin domain-containing protein 1 (160 aa).

Disordered stretches follow at residues 1-34 and 95-160; these read MESP…GDTC and ADSD…PKED. Phosphoserine is present on residues Ser-3, Ser-97, and Ser-121. Residues 127-143 show a composition bias toward basic and acidic residues; the sequence is TRAEQNREKQTPSDPER.

Belongs to the dysbindin family.

This chain is Dysbindin domain-containing protein 1 (Dbndd1), found in Rattus norvegicus (Rat).